The following is a 716-amino-acid chain: Fatty acid oxidation complex subunit alpha (716 aa).

An enoyl-CoA hydratase/isomerase region spans residues 1–189 (MIYQSPTIQV…KVGAVDAVVA (189 aa)). Asp296 is a substrate binding site. The tract at residues 311–716 (KEVKNAAVLG…ATNNGSYYQA (406 aa)) is 3-hydroxyacyl-CoA dehydrogenase. Residues Met324, Asp343, 400 to 402 (VVE), Lys407, and Ser429 contribute to the NAD(+) site. His450 (for 3-hydroxyacyl-CoA dehydrogenase activity) is an active-site residue. NAD(+) is bound at residue Asn453. Substrate is bound by residues Asn500 and Tyr660.

The protein in the N-terminal section; belongs to the enoyl-CoA hydratase/isomerase family. It in the C-terminal section; belongs to the 3-hydroxyacyl-CoA dehydrogenase family. As to quaternary structure, heterotetramer of two alpha chains (FadB) and two beta chains (FadA).

The catalysed reaction is a (3S)-3-hydroxyacyl-CoA + NAD(+) = a 3-oxoacyl-CoA + NADH + H(+). It catalyses the reaction a (3S)-3-hydroxyacyl-CoA = a (2E)-enoyl-CoA + H2O. The enzyme catalyses a 4-saturated-(3S)-3-hydroxyacyl-CoA = a (3E)-enoyl-CoA + H2O. It carries out the reaction (3S)-3-hydroxybutanoyl-CoA = (3R)-3-hydroxybutanoyl-CoA. The catalysed reaction is a (3Z)-enoyl-CoA = a 4-saturated (2E)-enoyl-CoA. It catalyses the reaction a (3E)-enoyl-CoA = a 4-saturated (2E)-enoyl-CoA. Its pathway is lipid metabolism; fatty acid beta-oxidation. In terms of biological role, involved in the aerobic and anaerobic degradation of long-chain fatty acids via beta-oxidation cycle. Catalyzes the formation of 3-oxoacyl-CoA from enoyl-CoA via L-3-hydroxyacyl-CoA. It can also use D-3-hydroxyacyl-CoA and cis-3-enoyl-CoA as substrate. This is Fatty acid oxidation complex subunit alpha from Shewanella putrefaciens (strain CN-32 / ATCC BAA-453).